The sequence spans 49 residues: Large ribosomal subunit protein bL33B (49 aa).

The protein belongs to the bacterial ribosomal protein bL33 family.

This chain is Large ribosomal subunit protein bL33B (rpmGB), found in Bacillus licheniformis.